The chain runs to 236 residues: 3-deoxy-D-manno-octulosonic acid kinase (236 aa).

Aspartate 167 is an active-site residue.

This sequence belongs to the protein kinase superfamily. KdkA/RfaP family.

The protein localises to the cell inner membrane. The enzyme catalyses an alpha-Kdo-(2-&gt;6)-lipid IVA + ATP = a 4-O-phospho-alpha-Kdo-(2-&gt;6)-lipid IVA + ADP + H(+). The protein operates within bacterial outer membrane biogenesis; LPS core biosynthesis. Catalyzes the ATP-dependent phosphorylation of the 3-deoxy-D-manno-octulosonic acid (Kdo) residue in Kdo-lipid IV(A) at the 4-OH position. The protein is 3-deoxy-D-manno-octulosonic acid kinase of Vibrio vulnificus (strain CMCP6).